The chain runs to 276 residues: Phosphonates import ATP-binding protein PhnC (276 aa).

An ABC transporter domain is found at 2 to 246 (LEIHNLQKSY…VLTRIYGAED (245 aa)). Residue 35–42 (GPSGAGKS) participates in ATP binding.

It belongs to the ABC transporter superfamily. Phosphonates importer (TC 3.A.1.9.1) family. In terms of assembly, the complex is composed of two ATP-binding proteins (PhnC), two transmembrane proteins (PhnE) and a solute-binding protein (PhnD).

Its subcellular location is the cell inner membrane. It catalyses the reaction phosphonate(out) + ATP + H2O = phosphonate(in) + ADP + phosphate + H(+). Functionally, part of the ABC transporter complex PhnCDE involved in phosphonates import. Responsible for energy coupling to the transport system. This Alcaligenes faecalis protein is Phosphonates import ATP-binding protein PhnC.